The primary structure comprises 325 residues: Elongation factor P--(R)-beta-lysine ligase (325 aa).

Substrate is bound at residue 76 to 78 (SPE). ATP is bound by residues 100–102 (RNE) and Asn109. Substrate is bound at residue Tyr118. 244-245 (EL) lines the ATP pocket. Glu251 is a binding site for substrate. Residue Gly300 participates in ATP binding.

It belongs to the class-II aminoacyl-tRNA synthetase family. EpmA subfamily. Homodimer.

The enzyme catalyses D-beta-lysine + L-lysyl-[protein] + ATP = N(6)-((3R)-3,6-diaminohexanoyl)-L-lysyl-[protein] + AMP + diphosphate + H(+). With EpmB is involved in the beta-lysylation step of the post-translational modification of translation elongation factor P (EF-P). Catalyzes the ATP-dependent activation of (R)-beta-lysine produced by EpmB, forming a lysyl-adenylate, from which the beta-lysyl moiety is then transferred to the epsilon-amino group of a conserved specific lysine residue in EF-P. The polypeptide is Elongation factor P--(R)-beta-lysine ligase (Proteus mirabilis (strain HI4320)).